Reading from the N-terminus, the 220-residue chain is Guanylate kinase (220 aa).

Residues 16–195 (GLMFVLSSPS…AFESVRSILR (180 aa)) enclose the Guanylate kinase-like domain. 23 to 30 (SPSGAGKT) is a binding site for ATP.

It belongs to the guanylate kinase family.

It localises to the cytoplasm. The enzyme catalyses GMP + ATP = GDP + ADP. Essential for recycling GMP and indirectly, cGMP. The protein is Guanylate kinase of Rhodopseudomonas palustris (strain ATCC BAA-98 / CGA009).